A 409-amino-acid polypeptide reads, in one-letter code: 3-dehydro-bile acid delta(4,6)-reductase (409 aa).

The FAD site is built by serine 12, glutamate 33, valine 131, glutamate 378, asparagine 390, and leucine 391.

The protein belongs to the BaiN/RdsA family. BaiN subfamily. FAD is required as a cofactor.

The catalysed reaction is 3-oxocholan-24-oyl-CoA + NAD(+) = 3-oxochol-4-en-24-oyl-CoA + NADH + H(+). The enzyme catalyses 3-oxochol-4-en-24-oyl-CoA + NAD(+) = 3-oxochol-4,6-dien-24-oyl-CoA + NADH + H(+). It catalyses the reaction 12alpha-hydroxy-3-oxocholan-24-oyl-CoA + NAD(+) = 12alpha-hydroxy-3-oxochol-4-en-24-oyl-CoA + NADH + H(+). It carries out the reaction 12alpha-hydroxy-3-oxochol-4-en-24-oyl-CoA + NAD(+) = 12alpha-hydroxy-3-oxochola-4,6-dien-24-oyl-CoA + NADH + H(+). The protein operates within lipid metabolism; bile acid degradation. Functionally, involved in the secondary bile acid metabolism. Catalyzes two subsequent reductions of the double bonds within the bile acid A/B rings of 3-oxochol-4,6-dien-24-oyl-CoA and 12alpha-hydroxy-3-oxochol-4,6-dien-24-oyl-CoA to yield 3-oxocholan-24-oyl-CoA and 12alpha-hydroxy-3-oxocholan-24-oyl-CoA, respectively. The sequence is that of 3-dehydro-bile acid delta(4,6)-reductase from Clostridium scindens (strain ATCC 35704 / DSM 5676 / VPI 13733 / 19).